We begin with the raw amino-acid sequence, 769 residues long: Protein transport protein sec39 (769 aa).

It belongs to the SEC39 family. Component of a peripheral membrane protein complex consisting of dsl1, sec39 and tip20.

The protein localises to the endoplasmic reticulum membrane. Functionally, required for protein transport between the Golgi and the endoplasmic reticulum. May contribute to tethering of coatomer-coated retrograde transport vesicles to the ER membrane through interaction with and stabilization of the SNARE complex. The protein is Protein transport protein sec39 of Schizosaccharomyces pombe (strain 972 / ATCC 24843) (Fission yeast).